The following is a 314-amino-acid chain: tRNA pseudouridine synthase B (314 aa).

His-43 is a substrate binding site. The active-site Nucleophile is the Asp-48. The substrate site is built by Tyr-76, Tyr-179, and Leu-200.

Belongs to the pseudouridine synthase TruB family. Type 1 subfamily.

The enzyme catalyses uridine(55) in tRNA = pseudouridine(55) in tRNA. Responsible for synthesis of pseudouridine from uracil-55 in the psi GC loop of transfer RNAs. In Cronobacter sakazakii (strain ATCC BAA-894) (Enterobacter sakazakii), this protein is tRNA pseudouridine synthase B.